The primary structure comprises 476 residues: ATP synthase subunit beta (476 aa).

154–161 is an ATP binding site; sequence GGAGVGKT.

The protein belongs to the ATPase alpha/beta chains family. F-type ATPases have 2 components, CF(1) - the catalytic core - and CF(0) - the membrane proton channel. CF(1) has five subunits: alpha(3), beta(3), gamma(1), delta(1), epsilon(1). CF(0) has four main subunits: a(1), b(1), b'(1) and c(9-12).

It localises to the cell inner membrane. It carries out the reaction ATP + H2O + 4 H(+)(in) = ADP + phosphate + 5 H(+)(out). In terms of biological role, produces ATP from ADP in the presence of a proton gradient across the membrane. The catalytic sites are hosted primarily by the beta subunits. This Rhodopseudomonas palustris (strain HaA2) protein is ATP synthase subunit beta.